A 431-amino-acid chain; its full sequence is Protein translocase subunit SecY 1 (431 aa).

Helical transmembrane passes span 18 to 38 (IYFT…TVPG), 67 to 87 (YSIF…IQLL), 115 to 135 (YLTL…FNAL), 150 to 170 (VEIA…GDEI), 178 to 198 (GVSV…LYQI), 215 to 235 (ILFF…VTWV), 268 to 288 (VIPV…LMAF), 312 to 332 (GVII…FVQV), 365 to 385 (LIKL…LPQL), and 392 to 412 (LPSS…VVLE).

Belongs to the SecY/SEC61-alpha family. In terms of assembly, component of the Sec protein translocase complex. Heterotrimer consisting of SecY, SecE and SecG subunits. The heterotrimers can form oligomers, although 1 heterotrimer is thought to be able to translocate proteins. Interacts with the ribosome. Interacts with SecDF, and other proteins may be involved. Interacts with SecA.

The protein resides in the cell membrane. Its function is as follows. The central subunit of the protein translocation channel SecYEG. Consists of two halves formed by TMs 1-5 and 6-10. These two domains form a lateral gate at the front which open onto the bilayer between TMs 2 and 7, and are clamped together by SecE at the back. The channel is closed by both a pore ring composed of hydrophobic SecY resides and a short helix (helix 2A) on the extracellular side of the membrane which forms a plug. The plug probably moves laterally to allow the channel to open. The ring and the pore may move independently. The sequence is that of Protein translocase subunit SecY 1 from Lactobacillus kefiranofaciens subsp. kefiranofaciens.